We begin with the raw amino-acid sequence, 510 residues long: UDP-galactopyranose mutase (510 aa).

FAD-binding residues include T18, D38, L46, and G61. Residues G61 and G62 each contribute to the UDP-alpha-D-galactose site. An FAD-binding site is contributed by H63. H68, R91, and S93 together coordinate NADH. Residues H68, R91, S93, and Y104 each coordinate NADPH. UDP-alpha-D-galactose is bound by residues Y104, Q107, M159, Y162, N163, W167, and R182. An NADPH-binding site is contributed by N203. N207 provides a ligand contact to UDP-alpha-D-galactose. V242 lines the FAD pocket. Positions 315 and 317 each coordinate NADPH. UDP-alpha-D-galactose contacts are provided by Y317, R327, and Y419. R327 contributes to the FAD binding site. Y419 and R447 together coordinate NADH. Positions 419 and 447 each coordinate NADPH. Residue R447 coordinates FAD. A UDP-alpha-D-galactose-binding site is contributed by Y453. G456, N457, and Q458 together coordinate FAD. N457 serves as a coordination point for UDP-alpha-D-galactose. N457 provides a ligand contact to NADH. N457 is a binding site for NADPH. Residue H460 participates in NADPH binding. S461 serves as a coordination point for FAD.

The protein belongs to the UDP-galactopyranose/dTDP-fucopyranose mutase family. In terms of assembly, homotetramer. Requires FAD as cofactor.

The catalysed reaction is UDP-alpha-D-galactose = UDP-alpha-D-galactofuranose. Functionally, UDP-galactopyranose mutase, key flavoenzyme of galactofuranose metabolism that catalyzes the 6-to-5 ring contraction of UDP-galactopyranose to UDP-galactofuranose, the donor used by various galacto-furanosyltransferases. Controls the biosynthesis of galactomannan and galactofuranose containing glycoconjugates. The flavin functions as nucleophile, forming a flavin-sugar adduct that facilitates galactose-ring opening and contraction. The binding of UDP-galactopyranose induces profound conformational changes in the enzyme and two loops on opposite sides of the active site move toward each other by over 10 Angstroms to cover the substrate and create a closed active site. The sequence is that of UDP-galactopyranose mutase from Aspergillus fumigatus (Neosartorya fumigata).